A 380-amino-acid polypeptide reads, in one-letter code: Cytochrome b (380 aa).

Transmembrane regions (helical) follow at residues 34-54 (FGSL…ILAM), 78-100 (WLMR…AHMG), 113-133 (TWNI…MGYV), and 179-199 (FFAF…VHLL). Heme b-binding residues include His-84 and His-98. The heme b site is built by His-183 and His-197. His-202 contacts a ubiquinone. 4 helical membrane-spanning segments follow: residues 225-245 (FSWK…TITL), 289-309 (LGGV…MLTH), 324-344 (VIFW…AAPV), and 349-369 (ITLG…APMI).

This sequence belongs to the cytochrome b family. In terms of assembly, the main subunits of complex b-c1 are: cytochrome b, cytochrome c1 and the Rieske protein. Heme b is required as a cofactor.

Its subcellular location is the mitochondrion inner membrane. Component of the ubiquinol-cytochrome c reductase complex (complex III or cytochrome b-c1 complex) that is part of the mitochondrial respiratory chain. The b-c1 complex mediates electron transfer from ubiquinol to cytochrome c. Contributes to the generation of a proton gradient across the mitochondrial membrane that is then used for ATP synthesis. The chain is Cytochrome b (mt:Cyt-b) from Xenoturbella bocki (Marine worm).